The following is a 102-amino-acid chain: Large ribosomal subunit protein bL21 (102 aa).

The protein belongs to the bacterial ribosomal protein bL21 family. In terms of assembly, part of the 50S ribosomal subunit. Contacts protein L20.

Functionally, this protein binds to 23S rRNA in the presence of protein L20. The chain is Large ribosomal subunit protein bL21 from Shouchella clausii (strain KSM-K16) (Alkalihalobacillus clausii).